The following is a 242-amino-acid chain: Protein FsrB (242 aa).

The next 5 membrane-spanning stretches (helical) occupy residues L29–F49, L52–W72, W78–L95, V100–W120, and K160–T180.

This sequence belongs to the AgrB family.

The protein localises to the cell membrane. May be involved in the proteolytic processing of a quorum sensing system signal molecule precursor required for the regulation of the virulence genes for gelatinase (gelE) and a serine protease (sprE). The protein is Protein FsrB (fsrB) of Enterococcus faecalis (strain ATCC 47077 / OG1RF).